The following is a 378-amino-acid chain: Probable dihydroorotase-like protein (378 aa).

This sequence belongs to the metallo-dependent hydrolases superfamily. DHOase family. PyrC' subfamily.

Non-functional DHOase. This Helicobacter pylori (strain ATCC 700392 / 26695) (Campylobacter pylori) protein is Probable dihydroorotase-like protein (pyrC').